The primary structure comprises 838 residues: DNA gyrase subunit A (838 aa).

The Topo IIA-type catalytic domain occupies 41-510 (LPEVRDGLKP…ADGDVSDEDL (470 aa)). Y129 functions as the O-(5'-phospho-DNA)-tyrosine intermediate in the catalytic mechanism. Positions 537 to 543 (QKRGGKG) match the GyrA-box motif.

This sequence belongs to the type II topoisomerase GyrA/ParC subunit family. As to quaternary structure, heterotetramer, composed of two GyrA and two GyrB chains. In the heterotetramer, GyrA contains the active site tyrosine that forms a transient covalent intermediate with DNA, while GyrB binds cofactors and catalyzes ATP hydrolysis.

It is found in the cytoplasm. The enzyme catalyses ATP-dependent breakage, passage and rejoining of double-stranded DNA.. In terms of biological role, a type II topoisomerase that negatively supercoils closed circular double-stranded (ds) DNA in an ATP-dependent manner to modulate DNA topology and maintain chromosomes in an underwound state. Negative supercoiling favors strand separation, and DNA replication, transcription, recombination and repair, all of which involve strand separation. Also able to catalyze the interconversion of other topological isomers of dsDNA rings, including catenanes and knotted rings. Type II topoisomerases break and join 2 DNA strands simultaneously in an ATP-dependent manner. In Mycobacterium tuberculosis (strain CDC 1551 / Oshkosh), this protein is DNA gyrase subunit A.